Consider the following 80-residue polypeptide: DNA-binding protein HU-like (80 aa).

Belongs to the bacterial histone-like protein family.

Functionally, histone-like DNA-binding protein which is capable of wrapping DNA to stabilize it, and thus to prevent its denaturation under extreme environmental conditions. The sequence is that of DNA-binding protein HU-like from Rickettsia rickettsii (strain Sheila Smith).